The sequence spans 626 residues: (R)-linalool synthase 2, chloroplastic (626 aa).

A chloroplast-targeting transit peptide spans 1 to 21 (MAFVSIAPLASRCCVHKSFVS). Positions 377, 381, and 529 each coordinate Mg(2+). A DDXXD motif motif is present at residues 377–381 (DDIYD).

The protein belongs to the terpene synthase family. Tpsd subfamily. Requires Mg(2+) as cofactor. Mn(2+) serves as cofactor.

The protein localises to the plastid. It localises to the chloroplast. The enzyme catalyses (2E)-geranyl diphosphate + H2O = (R)-linalool + diphosphate. The protein operates within terpene metabolism; oleoresin biosynthesis. Terpene synthase (mono-TPS) involved in the biosynthesis of monoterpene natural products included in conifer oleoresin secretions and volatile emissions; these compounds contribute to biotic and abiotic stress defense against herbivores and pathogens. Catalyzes the conversion of (2E)-geranyl diphosphate (GPP) to (R)-linalool. The chain is (R)-linalool synthase 2, chloroplastic from Picea sitchensis (Sitka spruce).